The following is a 93-amino-acid chain: Small ribosomal subunit protein uS19c (93 aa).

The protein belongs to the universal ribosomal protein uS19 family.

It is found in the plastid. The protein localises to the chloroplast. In terms of biological role, protein S19 forms a complex with S13 that binds strongly to the 16S ribosomal RNA. The protein is Small ribosomal subunit protein uS19c of Ipomoea purpurea (Common morning glory).